A 171-amino-acid polypeptide reads, in one-letter code: Regulator of ribonuclease activity A (171 aa).

It belongs to the RraA family. As to quaternary structure, homotrimer. Binds to both RNA-binding sites in the C-terminal region of Rne and to RhlB.

It localises to the cytoplasm. Globally modulates RNA abundance by binding to RNase E (Rne) and regulating its endonucleolytic activity. Can modulate Rne action in a substrate-dependent manner by altering the composition of the degradosome. Modulates RNA-binding and helicase activities of the degradosome. In Vibrio cholerae serotype O1 (strain ATCC 39315 / El Tor Inaba N16961), this protein is Regulator of ribonuclease activity A.